Consider the following 158-residue polypeptide: Low molecular weight phosphotyrosine protein phosphatase (158 aa).

Position 2 is an N-acetylalanine (Ala2). The active-site Nucleophile is the Cys13. Arg19 is a catalytic residue. Catalysis depends on Asp130, which acts as the Proton donor. Phosphotyrosine is present on residues Tyr132 and Tyr133.

The protein belongs to the low molecular weight phosphotyrosine protein phosphatase family. Interacts with EPHA2; dephosphorylates EPHA2. Interacts with EPHB1. As to quaternary structure, interacts with the SH3 domain of SPTAN1. There is no interaction observed for isoform 2. In terms of processing, phosphorylated by LCK. Phosphorylation at Tyr-132 increases its phosphatase activity.

It localises to the cytoplasm. It catalyses the reaction O-phospho-L-tyrosyl-[protein] + H2O = L-tyrosyl-[protein] + phosphate. The catalysed reaction is a phosphate monoester + H2O = an alcohol + phosphate. Inhibited by sulfhydryl reagents. Acts on tyrosine phosphorylated proteins, low-MW aryl phosphates and natural and synthetic acyl phosphates with differences in substrate specificity between isoform 1 and isoform 2. The chain is Low molecular weight phosphotyrosine protein phosphatase from Rattus norvegicus (Rat).